We begin with the raw amino-acid sequence, 84 residues long: PAMP-induced secreted peptide 2 (84 aa).

Positions 1–24 (MMMNKNVLSSILFFMLIGSVLVES) are cleaved as a signal peptide. The interval 50–84 (KDSGPSPGEGHKVVDRKDTFRFVKHSGPSPSGPGH) is disordered. Over residues 58-70 (EGHKVVDRKDTFR) the composition is skewed to basic and acidic residues. 4-hydroxyproline is present on residues Pro77 and Pro79.

Post-translationally, contains 4-hydroxyproline; hydroxylated on Pro-77 and Pro-79.

It is found in the secreted. The protein localises to the extracellular space. Its subcellular location is the apoplast. Endogenous secreted peptide that acts as elicitor of immune response and positive regulator of defense response. Amplifies the immune response triggered by flg22, the active epitope of bacterial flagellin. Acts as a negative regulator of root growth. This is PAMP-induced secreted peptide 2 from Arabidopsis thaliana (Mouse-ear cress).